The sequence spans 144 residues: 3-dehydroquinate dehydratase (144 aa).

Residue Tyr-22 is the Proton acceptor of the active site. Asn-73, His-79, and Asp-86 together coordinate substrate. His-99 acts as the Proton donor in catalysis. Substrate contacts are provided by residues 100–101 (IS) and Arg-110.

This sequence belongs to the type-II 3-dehydroquinase family. Homododecamer.

The enzyme catalyses 3-dehydroquinate = 3-dehydroshikimate + H2O. Its pathway is metabolic intermediate biosynthesis; chorismate biosynthesis; chorismate from D-erythrose 4-phosphate and phosphoenolpyruvate: step 3/7. In terms of biological role, catalyzes a trans-dehydration via an enolate intermediate. The chain is 3-dehydroquinate dehydratase from Mycobacteroides abscessus (strain ATCC 19977 / DSM 44196 / CCUG 20993 / CIP 104536 / JCM 13569 / NCTC 13031 / TMC 1543 / L948) (Mycobacterium abscessus).